Reading from the N-terminus, the 465-residue chain is Mothers against decapentaplegic homolog 1 (465 aa).

Position 1 is an N-acetylmethionine (methionine 1). The region spanning proline 12–proline 136 is the MH1 domain. Zn(2+) contacts are provided by cysteine 64, cysteine 109, cysteine 121, and histidine 126. Positions asparagine 162–methionine 246 are disordered. Residues proline 179–proline 212 show a composition bias toward low complexity. Residues aspartate 221–aspartate 232 show a composition bias toward pro residues. The 195-residue stretch at tryptophan 271–serine 465 folds into the MH2 domain. Threonine 322 bears the Phosphothreonine; by MINK1, TNIK and MAP4K4 mark. The segment at lysine 418–aspartate 428 is L3 loop. Residues serine 463 and serine 465 each carry the phosphoserine modification.

This sequence belongs to the dwarfin/SMAD family. In terms of assembly, found in a complex with SMAD4 and YY1. Interacts with HGS, NANOG and ZCCHC12. Upon C-terminus phosphorylation: forms trimers with another SMAD1 and the co-SMAD SMAD4. Interacts with PEBP2-alpha subunit, CREB-binding protein (CBP), p300, SMURF1, SMURF2, USP15 and HOXC8. Associates with ZNF423 or ZNF521 in response to BMP2 leading to activate transcription of BMP target genes. Interacts with SKOR1. Interacts (via MH2 domain) with LEMD3. Binding to LEMD3 results in at least a partial reduction of receptor-mediated phosphorylation. Forms a ternary complex with PSMB4 and OAZ1 before PSMB4 is incorporated into the 20S proteasome. Interacts (via MH2 domain) with FAM83G (via MH2 domain); in a SMAD4-independent manner. Interacts with ZC3H3. Interacts with TMEM119. Interacts (via MH1 and MH2 domains) with ZNF8. Interacts with RANBP3L; the interaction increases when SMAD1 is not phosphorylated and mediates SMAD1 nuclear export. Interacts with EGR1; this interaction inhibits SMAD1 dephosphorylation. Interacts with SMAD6. Interacts with YAP1. Interacts with MTMR4; negatively regulates BMP signaling through SMAD1 dephosphorylation and retention in endosomes. Post-translationally, phosphorylation of the C-terminal SVS motif by BMP type 1 receptor kinase activates SMAD1 by promoting dissociation from the receptor and trimerization with SMAD4. Phosphorylation by ERK2 MAP kinase in response to EGF or HGF prevents SMAD1 nuclear accumulation and transcriptional activity in response to BMP. Dephosphorylation, probably by PPM1A, induces its export from the nucleus to the cytoplasm. Dephosphorylation is inhibited by association with EGR1. Phosphorylation by CDK8/9 creates binding sites for YAP1, and subsequent phosphorylation by GSK3 switches off YAP1 binding and adds binding sites for SMURF1. In terms of processing, ubiquitinated by SMAD-specific E3 ubiquitin ligase SMURF1, leading to its degradation. Monoubiquitinated, leading to prevent DNA-binding. Deubiquitination by USP15 alleviates inhibition and promotes activation of TGF-beta target genes. Dephosphorylation, probably by PPM1A, induces its export from the nucleus to the cytoplasm. Phospho-SMAD1 is ubiquitinated by CHIP leading to disruption of the SMAD1-SMAD4 complex. In terms of tissue distribution, ubiquitous.

The protein resides in the cytoplasm. The protein localises to the nucleus. Functionally, transcriptional modulator that plays a role in various cellular processes, including embryonic development, cell differentiation, and tissue homeostasis. Upon BMP ligand binding to their receptors at the cell surface, is phosphorylated by activated type I BMP receptors (BMPRIs) and associates with SMAD4 to form a heteromeric complex which translocates into the nucleus acting as transcription factor. In turn, the hetero-trimeric complex recognizes cis-regulatory elements containing Smad Binding Elements (SBEs) to modulate the outcome of the signaling network. SMAD1/OAZ1/PSMB4 complex mediates the degradation of the CREBBP/EP300 repressor SNIP1. Positively regulates BMP4-induced expression of odontogenic development regulator MSX1 following IPO7-mediated nuclear import. The chain is Mothers against decapentaplegic homolog 1 (Smad1) from Mus musculus (Mouse).